The chain runs to 241 residues: Tetraspanin-1 (241 aa).

Residues 1 to 11 (MGCFNFIKVMM) lie on the Cytoplasmic side of the membrane. The helical transmembrane segment at 12–32 (ILFNMLIFLCGAALLAVGIWV) threads the bilayer. At 33–52 (SVDGPSFVKIFGPMSSSAMQ) the chain is on the extracellular side. A helical membrane pass occupies residues 53–73 (FVNVGYFLIAAGAVLFALGFL). Over 74-88 (GCYGAQTESKCALMT) the chain is Cytoplasmic. A helical membrane pass occupies residues 89–109 (FFFILLLIFIAEVAAAVVALV). At 110–211 (YTTLAENFLT…KQLLYDIRTN (102 aa)) the chain is on the extracellular side. Asparagine 141, asparagine 154, asparagine 167, asparagine 180, asparagine 189, and asparagine 194 each carry an N-linked (GlcNAc...) asparagine glycan. A helical transmembrane segment spans residues 212–232 (AVTVGGVAAGIGGLELAAMIV). The Cytoplasmic portion of the chain corresponds to 233-241 (SMYLYCNLE).

The protein belongs to the tetraspanin (TM4SF) family. Interacts with SLC19A2. Interacts with NTRK1/TRKA.

It localises to the lysosome membrane. Structural component of specialized membrane microdomains known as tetraspanin-enriched microdomains (TERMs), which act as platforms for receptor clustering and signaling. Participates thereby in diverse biological functions such as cell signal transduction, adhesion, migration and protein trafficking. Regulates neuronal differentiation in response to NGF by facilitating NGF-mediated activation of NTRK1/TRKA receptor tyrosine kinase and subsequent downstream signaling pathways. Plays a role in the inhibition of TNFalpha-induced apoptosis. Mechanistically, inhibits the NF-kappa-B signaling pathway by blocking phosphorylation of CHUK. Also promotes the stability of the thiamine transporter 1/SLC19A2 in intestinal epithelial cells leading to an increase of thiamine uptake process. This is Tetraspanin-1 (TSPAN1) from Bos taurus (Bovine).